The sequence spans 184 residues: ATP-dependent protease subunit HslV (184 aa).

Residue threonine 12 is part of the active site. Residues alanine 166, cysteine 169, and threonine 172 each coordinate Na(+).

The protein belongs to the peptidase T1B family. HslV subfamily. A double ring-shaped homohexamer of HslV is capped on each side by a ring-shaped HslU homohexamer. The assembly of the HslU/HslV complex is dependent on binding of ATP.

The protein localises to the cytoplasm. The enzyme catalyses ATP-dependent cleavage of peptide bonds with broad specificity.. With respect to regulation, allosterically activated by HslU binding. In terms of biological role, protease subunit of a proteasome-like degradation complex believed to be a general protein degrading machinery. This is ATP-dependent protease subunit HslV from Nitrobacter hamburgensis (strain DSM 10229 / NCIMB 13809 / X14).